Here is a 354-residue protein sequence, read N- to C-terminus: Decorin (354 aa).

An N-terminal signal peptide occupies residues 1–16; sequence MKATLVLFLLAQVSWA. The propeptide occupies 17–30; the sequence is GPFEQRGLFDFMLE. Ser34 carries an O-linked (Xyl...) (glycosaminoglycan) serine glycan. 2 disulfide bridges follow: Cys49–Cys55 and Cys53–Cys62. LRR repeat units lie at residues 68–88, 89–112, 113–136, 137–157, 158–181, 182–207, 208–228, 229–252, 253–276, 277–299, 300–329, and 330–354; these read DKVP…NNKI, TEIK…NNKI, SKIS…KNHL, KELP…DNEI, TKLK…GNPL, KNSG…DTNI, TAIP…GNKI, AKVD…FNSI, TVVE…NNKL, LRVP…NNNI, SEVG…SNPV, and RYWQ…GNYK. Asn206 carries N-linked (GlcNAc...) asparagine glycosylation. Residues Asn241, Asn257, and Asn298 are each glycosylated (N-linked (GlcNAc...) asparagine). A disulfide bridge connects residues Cys308 and Cys341.

It belongs to the small leucine-rich proteoglycan (SLRP) family. SLRP class I subfamily. As to quaternary structure, binds to type I and type II collagen, fibronectin and TGF-beta. Forms a ternary complex with MFAP2 and ELN. Interacts with DPT. In terms of processing, the attached glycosaminoglycan chain can be either chondroitin sulfate or dermatan sulfate depending upon the tissue of origin.

Its subcellular location is the secreted. It is found in the extracellular space. The protein resides in the extracellular matrix. May affect the rate of fibrils formation. May be implicated in the dilatation of the rat cervix. The sequence is that of Decorin (Dcn) from Rattus norvegicus (Rat).